A 106-amino-acid polypeptide reads, in one-letter code: Small ribosomal subunit protein uS10 (106 aa).

The protein belongs to the universal ribosomal protein uS10 family. As to quaternary structure, part of the 30S ribosomal subunit.

Involved in the binding of tRNA to the ribosomes. The protein is Small ribosomal subunit protein uS10 of Prochlorococcus marinus (strain MIT 9301).